The primary structure comprises 217 residues: PMTLGYWNIRGLTHPIRLILEYTNSGYEEKRYNMGDAPDYDRSQWLNEKFKLGLDFPNLPYLIDGTHKLTQSNAILRYIARKHNLCGVTEEETIRMDILENQVMDIRMQLIMLCYSPDFEQKKAEFLEGIPDKMKLFSQFLGKLPWFAGNKLTYVDFLAYDVLDQYRMLEPKCLEAFPNLKDFISRFEGLEKISSYMKSSRFLPKPLFSKFAFWNNK.

The GST N-terminal domain maps to 1 to 87 (PMTLGYWNIR…YIARKHNLCG (87 aa)). Glutathione contacts are provided by residues 6–7 (YW), 45–49 (WLNEK), 58–59 (NL), and 71–72 (QS). The GST C-terminal domain occupies 89-207 (TEEETIRMDI…KSSRFLPKPL (119 aa)). Tyr115 serves as a coordination point for substrate.

It belongs to the GST superfamily. Mu family. As to quaternary structure, homodimer.

Its subcellular location is the cytoplasm. It catalyses the reaction RX + glutathione = an S-substituted glutathione + a halide anion + H(+). It carries out the reaction prostaglandin A2 + glutathione = prostaglandin A2-S-(R)-glutathione. The enzyme catalyses prostaglandin J2 + glutathione = prostaglandin J2-S-(R)-glutathione. The catalysed reaction is prostaglandin J2 + glutathione = prostaglandin J2-S-(S)-glutathione. It catalyses the reaction prostaglandin A2 + glutathione = prostaglandin A2-S-(S)-glutathione. It carries out the reaction 11(S)-hydroxy-14(S),15(S)-epoxy-(5Z,8Z,12E)-eicosatrienoate + glutathione = (11S,15S)-dihydroxy-14(R)-S-glutathionyl-(5Z,8Z,12E)-eicosatrienoate. In terms of biological role, conjugation of reduced glutathione to a wide number of exogenous and endogenous hydrophobic electrophiles. Involved in the formation of glutathione conjugates of both prostaglandin A2 (PGA2) and prostaglandin J2 (PGJ2). Participates in the formation of novel hepoxilin regioisomers. This is Glutathione S-transferase B (GSTM1) from Cavia porcellus (Guinea pig).